We begin with the raw amino-acid sequence, 376 residues long: Heme-dependent oxidative N-demethylase gamma subunit (376 aa).

In terms of assembly, the heme-dependent oxidative N-demethylase (HODM) is a heterotetramer composed of a catalytic alpha subunit, a FMN/2Fe-2S-dependent oxidoreductase beta subunit, a gamma subunit with putative aminotransferase activity, and a delta subunit of unknown function.

In terms of biological role, component of the heme-dependent oxidative N-demethylase (HODM) enzyme, that catalyzes the NADPH-dependent oxidation of dimethylamine (DMA) to methylamine (MA) and formaldehyde. Functions in bacterial methylated amine catabolism, linking alkylamine oxidation to the tetrahydrofolate C1 pool. The gamma subunit of HODM may act as an aminomethyltransferase involved in the detoxification of formaldehyde released by the alpha subunit; this process requires tetrahydrofolate (THF). The polypeptide is Heme-dependent oxidative N-demethylase gamma subunit (Ectopseudomonas mendocina (strain ymp) (Pseudomonas mendocina)).